Reading from the N-terminus, the 309-residue chain is Ornithine carbamoyltransferase (309 aa).

Residues 51–54 (STRT), Gln-78, Arg-102, and 129–132 (HPVQ) each bind carbamoyl phosphate. L-ornithine is bound by residues Asn-160, Asp-224, and 228-229 (SM). Residues 264–265 (CL) and Arg-292 each bind carbamoyl phosphate.

The protein belongs to the aspartate/ornithine carbamoyltransferase superfamily. OTCase family.

Its subcellular location is the cytoplasm. It catalyses the reaction carbamoyl phosphate + L-ornithine = L-citrulline + phosphate + H(+). The protein operates within amino-acid biosynthesis; L-arginine biosynthesis; L-arginine from L-ornithine and carbamoyl phosphate: step 1/3. Reversibly catalyzes the transfer of the carbamoyl group from carbamoyl phosphate (CP) to the N(epsilon) atom of ornithine (ORN) to produce L-citrulline. The protein is Ornithine carbamoyltransferase of Campylobacter fetus subsp. fetus (strain 82-40).